The following is a 567-amino-acid chain: 2-isopropylmalate synthase (567 aa).

A Pyruvate carboxyltransferase domain is found at 28-302 (PQWCSVDLRD…NPELDFSDIN (275 aa)). Positions 37, 241, 243, and 277 each coordinate Mg(2+). Residues 435-567 (IRTPLQLNYH…DMDTQEEDIA (133 aa)) form a regulatory domain region.

This sequence belongs to the alpha-IPM synthase/homocitrate synthase family. LeuA type 2 subfamily. In terms of assembly, homodimer. Requires Mg(2+) as cofactor.

The protein localises to the cytoplasm. The catalysed reaction is 3-methyl-2-oxobutanoate + acetyl-CoA + H2O = (2S)-2-isopropylmalate + CoA + H(+). It functions in the pathway amino-acid biosynthesis; L-leucine biosynthesis; L-leucine from 3-methyl-2-oxobutanoate: step 1/4. Functionally, catalyzes the condensation of the acetyl group of acetyl-CoA with 3-methyl-2-oxobutanoate (2-ketoisovalerate) to form 3-carboxy-3-hydroxy-4-methylpentanoate (2-isopropylmalate). The chain is 2-isopropylmalate synthase from Acetoanaerobium sticklandii (strain ATCC 12662 / DSM 519 / JCM 1433 / CCUG 9281 / NCIMB 10654 / HF) (Clostridium sticklandii).